The following is a 309-amino-acid chain: Porphobilinogen deaminase (309 aa).

Cys-242 is subject to S-(dipyrrolylmethanemethyl)cysteine.

This sequence belongs to the HMBS family. In terms of assembly, monomer. Requires dipyrromethane as cofactor.

The catalysed reaction is 4 porphobilinogen + H2O = hydroxymethylbilane + 4 NH4(+). Its pathway is porphyrin-containing compound metabolism; protoporphyrin-IX biosynthesis; coproporphyrinogen-III from 5-aminolevulinate: step 2/4. In terms of biological role, tetrapolymerization of the monopyrrole PBG into the hydroxymethylbilane pre-uroporphyrinogen in several discrete steps. The polypeptide is Porphobilinogen deaminase (Legionella pneumophila subsp. pneumophila (strain Philadelphia 1 / ATCC 33152 / DSM 7513)).